Reading from the N-terminus, the 309-residue chain is Ribosomal RNA small subunit methyltransferase H (309 aa).

S-adenosyl-L-methionine-binding positions include 30–32, Asp-50, Phe-74, Asp-96, and Gln-103; that span reads GGH.

This sequence belongs to the methyltransferase superfamily. RsmH family.

The protein resides in the cytoplasm. The enzyme catalyses cytidine(1402) in 16S rRNA + S-adenosyl-L-methionine = N(4)-methylcytidine(1402) in 16S rRNA + S-adenosyl-L-homocysteine + H(+). Specifically methylates the N4 position of cytidine in position 1402 (C1402) of 16S rRNA. In Wigglesworthia glossinidia brevipalpis, this protein is Ribosomal RNA small subunit methyltransferase H.